We begin with the raw amino-acid sequence, 154 residues long: MPLFNMHQIRGQLGRDQRLLGLDPGQKTIGLALSDVSLMLASPYGALRRGKLSVVAAEIRRIAAREGVGGLVSGLPLSMDGSFGPAAQAARDWMISLSEQVGLPAAMWDERLSSSAVNRMLIQDADMTRQRRAELVDKLAASYMLQGALDATAE.

Belongs to the YqgF nuclease family.

It is found in the cytoplasm. Its function is as follows. Could be a nuclease involved in processing of the 5'-end of pre-16S rRNA. This is Putative pre-16S rRNA nuclease from Gluconacetobacter diazotrophicus (strain ATCC 49037 / DSM 5601 / CCUG 37298 / CIP 103539 / LMG 7603 / PAl5).